The chain runs to 292 residues: mRNA export protein 33 (292 aa).

The interval 1 to 76 is disordered; that stretch reads MPPKKAAKGK…RKRREEEKRA (76 aa). Composition is skewed to basic and acidic residues over residues 9-26 and 58-76; these read GKGD…KKAA and KDAK…EKRA. A C3H1-type zinc finger spans residues 134 to 172; that stretch reads INTDIVCKFFLEACETGKYGWLWQCPNGNMTCIYKHALP.

It localises to the cytoplasm. In terms of biological role, functions as a component of the nuclear pore complex (NPC). NPC components, collectively referred to as nucleoporins (NUPs), can play the role of both NPC structural components and of docking or interaction partners for transiently associated nuclear transport factors. Active directional transport is assured by both, a Phe-Gly (FG) repeat affinity gradient for these transport factors across the NPC and a transport cofactor concentration gradient across the nuclear envelope. Involved in the export of mRNA from the nucleus to the cytoplasm. May play a role in mitotic spindle formation and/or function. This is mRNA export protein 33 (mep33) from Schizosaccharomyces pombe (strain 972 / ATCC 24843) (Fission yeast).